The primary structure comprises 246 residues: Putative protein phosphatase 2C-type (246 aa).

The PPM-type phosphatase domain occupies 2-240; that stretch reads KISLKTDIGQ…DNITIALVHN (239 aa). Positions 36, 37, 192, and 231 each coordinate Mn(2+).

Requires Mg(2+) as cofactor. Mn(2+) serves as cofactor.

The catalysed reaction is O-phospho-L-seryl-[protein] + H2O = L-seryl-[protein] + phosphate. The enzyme catalyses O-phospho-L-threonyl-[protein] + H2O = L-threonyl-[protein] + phosphate. This chain is Putative protein phosphatase 2C-type, found in Streptococcus pyogenes serotype M6 (strain ATCC BAA-946 / MGAS10394).